A 125-amino-acid polypeptide reads, in one-letter code: uncharacterized protein (125 aa).

The tract at residues 1-21 (MLFYHCSSFSSSSSSSSSSAS) is disordered. Residues 7-21 (SSFSSSSSSSSSSAS) are compositionally biased toward low complexity.

This is an uncharacterized protein from Saccharomyces cerevisiae (strain ATCC 204508 / S288c) (Baker's yeast).